The primary structure comprises 224 residues: Small ribosomal subunit protein eS1 (224 aa).

Belongs to the eukaryotic ribosomal protein eS1 family.

The polypeptide is Small ribosomal subunit protein eS1 (Methanococcus maripaludis (strain C7 / ATCC BAA-1331)).